The sequence spans 122 residues: uncharacterized protein (122 aa).

This is an uncharacterized protein from Schizosaccharomyces pombe (strain 972 / ATCC 24843) (Fission yeast).